The primary structure comprises 104 residues: MNTYNARLYIFSLALALVILKGTKCYMYVFLQEPGAAFCVDDSGVRYKPGDVWYDDEKCEKLRCSGAEASLKIIGAGCGIIHVVGCETVRGSGHYPNCCPRPKC.

A signal peptide spans 1 to 25 (MNTYNARLYIFSLALALVILKGTKC).

Post-translationally, contains 4 disulfide bonds. As to expression, expressed by the venom gland.

Its subcellular location is the secreted. In Urodacus yaschenkoi (Inland robust scorpion), this protein is Toxin-like protein 14.